The chain runs to 315 residues: Peroxidase 4 (315 aa).

The N-terminal stretch at 1–19 (MAIFKILVLLLSLCCFSQA) is a signal peptide. Residue Gln20 is modified to Pyrrolidone carboxylic acid. 4 disulfides stabilise this stretch: Cys30-Cys110, Cys63-Cys68, Cys116-Cys311, and Cys195-Cys221. Residue His61 is the Proton acceptor of the active site. Asp62, Val65, Gly67, Asp69, and Ser71 together coordinate Ca(2+). A substrate-binding site is contributed by Pro158. Residue His188 participates in heme b binding. Position 189 (Thr189) interacts with Ca(2+). N-linked (GlcNAc...) asparagine glycosylation is present at Asn205. Positions 234, 237, and 242 each coordinate Ca(2+).

The protein belongs to the peroxidase family. Classical plant (class III) peroxidase subfamily. Heme b serves as cofactor. Requires Ca(2+) as cofactor.

It is found in the secreted. The enzyme catalyses 2 a phenolic donor + H2O2 = 2 a phenolic radical donor + 2 H2O. Its function is as follows. Removal of H(2)O(2), oxidation of toxic reductants, biosynthesis and degradation of lignin, suberization, auxin catabolism, response to environmental stresses such as wounding, pathogen attack and oxidative stress. These functions might be dependent on each isozyme/isoform in each plant tissue. The chain is Peroxidase 4 (PER4) from Arabidopsis thaliana (Mouse-ear cress).